The primary structure comprises 205 residues: Ribonuclease HII (205 aa).

An RNase H type-2 domain is found at Thr-13–Cys-205. Asp-19, Glu-20, and Asp-114 together coordinate a divalent metal cation.

Belongs to the RNase HII family. Mn(2+) is required as a cofactor. Requires Mg(2+) as cofactor.

The protein localises to the cytoplasm. It carries out the reaction Endonucleolytic cleavage to 5'-phosphomonoester.. In terms of biological role, endonuclease that specifically degrades the RNA of RNA-DNA hybrids. This Blochmanniella floridana protein is Ribonuclease HII.